The following is an 857-amino-acid chain: Dynein regulatory complex protein 11 (857 aa).

In terms of domain architecture, IQ spans 206–235; sequence TKLAALQIQKVWRGFHQCKKTVKEREEEMV. The interval 348–388 is disordered; sequence EEKLKKKKKKEDKENKGKKGKKEKKEKKEKKVSLKEKAMKD. Positions 365–375 are enriched in basic residues; that stretch reads KKGKKEKKEKK. Residues 376-387 are compositionally biased toward basic and acidic residues; that stretch reads EKKVSLKEKAMK. 598 to 605 is an ATP binding site; sequence GPSGVGKK. Residues 834 to 857 are disordered; the sequence is SLTVGNKEKEKDKGKKGKRGKKKK. Residues 847–857 are compositionally biased toward basic residues; sequence GKKGKRGKKKK.

It belongs to the AAA ATPase family. DRC11 subfamily. Component of the nexin-dynein regulatory complex (N-DRC).

The protein resides in the cytoplasm. It is found in the cytoskeleton. The protein localises to the flagellum axoneme. Its function is as follows. Component of the nexin-dynein regulatory complex (N-DRC), a key regulator of ciliary/flagellar motility which maintains the alignment and integrity of the distal axoneme and regulates microtubule sliding in motile axonemes. The sequence is that of Dynein regulatory complex protein 11 (Iqca1) from Mus musculus (Mouse).